The chain runs to 131 residues: DCLPGWSSHEGHCYKVFNEYKTWKDAEKFCKKQGKSGHLVSVESSEEGDFVAKLISENLEKSHSIDFVWTGLTYKGRWKQCSSEWSDGSKIKYQKWGKQQPRKCLGLEKQTEFRKWVNLYCEEPQRFTCEI.

Residues aspartate 1–isoleucine 131 form the C-type lectin domain. 3 disulfide bridges follow: cysteine 2–cysteine 13, cysteine 30–cysteine 129, and cysteine 104–cysteine 121. Positions 41, 43, and 47 each coordinate Ca(2+). Position 130 (glutamate 130) interacts with Ca(2+).

It belongs to the snaclec family. Heterodimer of subunits A and B; disulfide-linked. As to expression, expressed by the venom gland.

The protein localises to the secreted. Functionally, anticoagulant protein which binds to coagulation factor IX (F9) and coagulation factor X (F10) in the presence of calcium. It may bind the gamma-carboxyglutamic acid-domain regions of factors with a 1 to 1 stoichiometry. The dissociation constant (K(d)) are 6.6 nM for factor IX (F9) and 125 nM for factor X (F10). Does not bind carbohydrates. In Echis carinatus (Saw-scaled viper), this protein is Snaclec coagulation factor IX/factor X-binding protein subunit A.